A 543-amino-acid polypeptide reads, in one-letter code: Sodium-dependent lysophosphatidylcholine symporter 1 (543 aa).

The segment covering 1–14 (MAKGEGAESGSAAG) has biased composition (low complexity). Positions 1–34 (MAKGEGAESGSAAGLLPTSILQSTERPAQVKKEP) are disordered. Residues 1–40 (MAKGEGAESGSAAGLLPTSILQSTERPAQVKKEPKKKKQQ) lie on the Cytoplasmic side of the membrane. Residues 41–70 (LSVCNKLCYALGGAPYQVTGCALGFFLQIY) form a helical membrane-spanning segment. The Extracellular portion of the chain corresponds to 71–94 (LLDVAQKDEEVVFCFSSFQVGPFS). A helical membrane pass occupies residues 95 to 115 (ASIILFVGRAWDAITDPLVGL). Over 116–127 (CISKSPWTCLGR) the chain is Cytoplasmic. A helical transmembrane segment spans residues 128-147 (LMPWIIFSTPLAVIAYFLIW). Over 148-157 (FVPDFPHGQT) the chain is Extracellular. Residues 158 to 182 (YWYLLFYCLFETMVTCFHVPYSALT) form a helical membrane-spanning segment. Over 183–189 (MFISTEQ) the chain is Cytoplasmic. The chain crosses the membrane as a helical span at residues 190-221 (TERDSATAYRMTVEVLGTVLGTAIQGQIVGQA). The Extracellular portion of the chain corresponds to 222 to 241 (DTPCFQDLNSSTVASQSANH). A disulfide bridge connects residues C225 and C473. N-linked (GlcNAc...) asparagine glycans are attached at residues N230 and N240. A helical transmembrane segment spans residues 242–275 (THGTTSHRETQKAYLLAAGVIVCIYIICAVILIL). Over 276–306 (GVREQREPYEAQQSEPIAYFRGLRLVMSHGP) the chain is Cytoplasmic. The helical transmembrane segment at 307–333 (YIKLITGFLFTSLAFMLVEGNFVLFCT) threads the bilayer. The Extracellular segment spans residues 334–344 (YTLGFRNEFQN). Residues 345–363 (LLLAIMLSATLTIPIWQWF) traverse the membrane as a helical segment. Topologically, residues 364 to 367 (LTRF) are cytoplasmic. The helical transmembrane segment at 368-389 (GKKTAVYVGISSAVPFLILVAL) threads the bilayer. At 390-392 (MES) the chain is on the extracellular side. The helical transmembrane segment at 393–429 (NLIITYAVAVAAGISVAAAFLLPWSMLPDVIDDFHLK) threads the bilayer. Over 430-439 (QPHFHGTEPI) the chain is Cytoplasmic. The chain crosses the membrane as a helical span at residues 440-466 (FFSFYVFFTKFASGVSLGISTLSLDFA). The Extracellular segment spans residues 467-478 (GYQTRGCSQPER). The helical transmembrane segment at 479-502 (VKFTLNMLVTMAPIVLILLGLLLF) threads the bilayer. Topologically, residues 503-543 (KMYPIDEERRRQNKKALQALRDEASSSGCSETDSTELASIL) are cytoplasmic.

This sequence belongs to the major facilitator superfamily. In terms of assembly, interacts with ERVFRD-1/syncytin-2. As to expression, in placenta, associated with trophoblast cells.

The protein localises to the cell membrane. It is found in the endoplasmic reticulum membrane. It carries out the reaction a 1-acyl-sn-glycero-3-phosphocholine(in) + Na(+)(in) = a 1-acyl-sn-glycero-3-phosphocholine(out) + Na(+)(out). The enzyme catalyses 1-(4Z,7Z,10Z,13Z,16Z,19Z-docosahexaenoyl)-sn-glycero-3-phosphocholine(in) + Na(+)(in) = 1-(4Z,7Z,10Z,13Z,16Z,19Z-docosahexaenoyl)-sn-glycero-3-phosphocholine(out) + Na(+)(out). The catalysed reaction is 1-(9Z-octadecenoyl)-sn-glycero-3-phosphocholine(in) + Na(+)(in) = 1-(9Z-octadecenoyl)-sn-glycero-3-phosphocholine(out) + Na(+)(out). It catalyses the reaction 1-hexadecanoyl-sn-glycero-3-phosphocholine(in) + Na(+)(in) = 1-hexadecanoyl-sn-glycero-3-phosphocholine(out) + Na(+)(out). It carries out the reaction a 1-acyl-sn-glycero-3-phosphoethanolamine(in) + Na(+)(in) = a 1-acyl-sn-glycero-3-phosphoethanolamine(out) + Na(+)(out). In terms of biological role, sodium-dependent lysophosphatidylcholine (LPC) symporter, which plays an essential role for blood-brain barrier formation and function. Specifically expressed in endothelium of the blood-brain barrier of micro-vessels and transports LPC into the brain. Transport of LPC is essential because it constitutes the major mechanism by which docosahexaenoic acid (DHA), an omega-3 fatty acid that is essential for normal brain growth and cognitive function, enters the brain. Transports LPC carrying long-chain fatty acids such LPC oleate and LPC palmitate with a minimum acyl chain length of 14 carbons. Does not transport docosahexaenoic acid in unesterified fatty acid. Specifically required for blood-brain barrier formation and function, probably by mediating lipid transport. Not required for central nervous system vascular morphogenesis. Acts as a transporter for tunicamycin, an inhibitor of asparagine-linked glycosylation. In placenta, acts as a receptor for ERVFRD-1/syncytin-2 and is required for trophoblast fusion. The sequence is that of Sodium-dependent lysophosphatidylcholine symporter 1 from Homo sapiens (Human).